We begin with the raw amino-acid sequence, 638 residues long: Intron-encoded RNA maturase bI4 (638 aa).

A COB exons 1 to 4 encoded region spans residues 1 to 253 (MAFRKSNVYL…VFYSPNTLGQ (253 aa)). Positions 253 to 638 (QNMALLLITY…LKFNEKWNNN (386 aa)) are COB intron 4 encoded.

This sequence in the C-terminal section; belongs to the LAGLIDADG endonuclease family. As to quaternary structure, forms a ternary complex with intron derived RNA and the imported mitochondrial leucyl-tRNA synthetase NAM2. The proteins do not interact directly with each other. In terms of processing, the mature protein may arise from proteolytic cleavage of an in-frame translation of COB exons 1 to 4 plus intron 4, containing the bI4 open reading frame. Cleavage would take place close to the Met-385 resulting in an active maturase of about 30 kDa.

Its subcellular location is the mitochondrion. Mitochondrial mRNA maturase required for splicing of intron 4 of the cytochrome b (COB) gene, containing its own coding sequence, and intron 4 in COX1, coding for the related homing endonuclease aI4. In vivo splicing requires in addition the imported mitochondrial leucyl-tRNA synthetase NAM2. Both proteins seem to stimulate the intrinsic ribozyme activity of intron bI4 through binding to and stabilizing specific secondary and tertiary structure elements in the RNA. The chain is Intron-encoded RNA maturase bI4 (BI4) from Saccharomyces cerevisiae (strain ATCC 204508 / S288c) (Baker's yeast).